The sequence spans 210 residues: MSDPMKTALSLVPMVIEQTNRGERAYDIFSRLLKERIIFINGPVEDGMAMLVCAQLLFLEAENPKKEISLYINSPGGVVTSGMAIYDTMQFIRPPVSTLCMGQAASMGSLLLTAGAKGHRFALPNARIMVHQPSGGFQGQASDIERHAQDIIKMKRRLNEIYVQHTGQGYEVIERTLDRDHFMTAEEAKAFGLVDDVIHYRAETEKEEKD.

The active-site Nucleophile is S106. The active site involves H131.

Belongs to the peptidase S14 family. In terms of assembly, fourteen ClpP subunits assemble into 2 heptameric rings which stack back to back to give a disk-like structure with a central cavity, resembling the structure of eukaryotic proteasomes.

It is found in the cytoplasm. It catalyses the reaction Hydrolysis of proteins to small peptides in the presence of ATP and magnesium. alpha-casein is the usual test substrate. In the absence of ATP, only oligopeptides shorter than five residues are hydrolyzed (such as succinyl-Leu-Tyr-|-NHMec, and Leu-Tyr-Leu-|-Tyr-Trp, in which cleavage of the -Tyr-|-Leu- and -Tyr-|-Trp bonds also occurs).. Cleaves peptides in various proteins in a process that requires ATP hydrolysis. Has a chymotrypsin-like activity. Plays a major role in the degradation of misfolded proteins. The protein is ATP-dependent Clp protease proteolytic subunit of Bartonella tribocorum (strain CIP 105476 / IBS 506).